We begin with the raw amino-acid sequence, 182 residues long: Ribosome maturation factor RimP (182 aa).

The protein belongs to the RimP family.

It is found in the cytoplasm. Required for maturation of 30S ribosomal subunits. The chain is Ribosome maturation factor RimP from Chloroherpeton thalassium (strain ATCC 35110 / GB-78).